The chain runs to 391 residues: Na(+)/H(+) antiporter NhaA (391 aa).

12 helical membrane-spanning segments follow: residues 9–29, 36–56, 59–79, 95–115, 123–143, 154–174, 177–197, 213–235, 259–279, 293–313, 329–349, and 364–384; these read FQLE…ALII, YLYS…LNIA, LLLW…GLEV, ILPA…YWFI, VAGW…VLAL, LFLM…IALF, GTLS…LIAM, LILW…ALAL, WVAY…SLAG, IAVG…WLAV, ILGV…VGSL, and MGIL…TAMA.

Belongs to the NhaA Na(+)/H(+) (TC 2.A.33) antiporter family.

It localises to the cell inner membrane. It carries out the reaction Na(+)(in) + 2 H(+)(out) = Na(+)(out) + 2 H(+)(in). In terms of biological role, na(+)/H(+) antiporter that extrudes sodium in exchange for external protons. The chain is Na(+)/H(+) antiporter NhaA from Pseudomonas putida (strain GB-1).